The sequence spans 263 residues: Glucosamine-6-phosphate deaminase 2 (263 aa).

Aspartate 82 acts as the Proton acceptor; for enolization step in catalysis. Asparagine 151 functions as the For ring-opening step in the catalytic mechanism. Residue histidine 153 is the Proton acceptor; for ring-opening step of the active site. Glutamate 158 (for ring-opening step) is an active-site residue.

It belongs to the glucosamine/galactosamine-6-phosphate isomerase family. Homohexamer.

The catalysed reaction is alpha-D-glucosamine 6-phosphate + H2O = beta-D-fructose 6-phosphate + NH4(+). Its function is as follows. Catalyzes the reversible conversion of alpha-D-glucosamine 6-phosphate (GlcN-6P) into beta-D-fructose 6-phosphate (Fru-6P) and ammonium ion, a regulatory reaction step in de novo uridine diphosphate-N-acetyl-alpha-D-glucosamine (UDP-GlcNAc) biosynthesis via hexosamine pathway. This is Glucosamine-6-phosphate deaminase 2 (GPI2) from Giardia intestinalis (Giardia lamblia).